Here is a 234-residue protein sequence, read N- to C-terminus: Triosephosphate isomerase (234 aa).

8-10 (NFK) contacts substrate. Catalysis depends on His-90, which acts as the Electrophile. Glu-159 serves as the catalytic Proton acceptor. Substrate-binding positions include Gly-165, Ser-197, and 218–219 (GS).

As to quaternary structure, homodimer.

The protein localises to the cytoplasm. It carries out the reaction D-glyceraldehyde 3-phosphate = dihydroxyacetone phosphate. It participates in carbohydrate biosynthesis; gluconeogenesis. Its pathway is carbohydrate degradation; glycolysis; D-glyceraldehyde 3-phosphate from glycerone phosphate: step 1/1. Functionally, involved in the gluconeogenesis. Catalyzes stereospecifically the conversion of dihydroxyacetone phosphate (DHAP) to D-glyceraldehyde-3-phosphate (G3P). This is Triosephosphate isomerase from Helicobacter pylori (strain ATCC 700392 / 26695) (Campylobacter pylori).